We begin with the raw amino-acid sequence, 123 residues long: Ribosome-binding factor A (123 aa).

This sequence belongs to the RbfA family. Monomer. Binds 30S ribosomal subunits, but not 50S ribosomal subunits or 70S ribosomes.

The protein localises to the cytoplasm. Its function is as follows. One of several proteins that assist in the late maturation steps of the functional core of the 30S ribosomal subunit. Associates with free 30S ribosomal subunits (but not with 30S subunits that are part of 70S ribosomes or polysomes). Required for efficient processing of 16S rRNA. May interact with the 5'-terminal helix region of 16S rRNA. The protein is Ribosome-binding factor A of Acetivibrio thermocellus (strain ATCC 27405 / DSM 1237 / JCM 9322 / NBRC 103400 / NCIMB 10682 / NRRL B-4536 / VPI 7372) (Clostridium thermocellum).